We begin with the raw amino-acid sequence, 523 residues long: MSVRPFESPPPYRPDEFKPNHYAPSNDMYGGEMHVRPMLSQPAYSFYPEDEILHFYKWTSPPGVIRILSMLVIVMCIAVFACVASTLAWDRAYGTGIFGGSMNYPYGSGFGSYGGGFGGYGYGYGYGYGGYTDPRAAKGFLLAMAAFCFIASLVIFVTSVIRSGMSRTRRYYLIVIIVSAILGIMVFIATIVYIMGVNPTAQASGSMYGSQIYTICSQFYTPGGTGLYVDQYLYHYCVVDPQEAIAIVLGFMIIVAFALIIVFAVKTRRKMDRYDKSNILWDKEHIYDEQPPNVEEWVKNVSAGTQDMPPPPSDYAERVDSPMAYSSNGKVNGKRSYPDSLYKSPPLVPEVAQEIPLTLSVDDFRQPRYSSNDNLETPSKRTPTKGKAGKAKRTDPDHYETDYTTGGESCDELEEDWLREYPPITSDQQRQLYKRNFDAGLQEYKSLLAELDEVNKELSRLDRELDDYREESEEYMAAADEYNRLKQVKGSADYKSKKNYCKQLKSKLSHIKRMVGDYDRRKT.

The tract at residues 1 to 20 (MSVRPFESPPPYRPDEFKPN) is disordered. The Cytoplasmic portion of the chain corresponds to 1–66 (MSVRPFESPP…KWTSPPGVIR (66 aa)). The MARVEL domain occupies 60-269 (SPPGVIRILS…IIVFAVKTRR (210 aa)). The chain crosses the membrane as a helical span at residues 67–87 (ILSMLVIVMCIAVFACVASTL). Over 88–140 (AWDRAYGTGIFGGSMNYPYGSGFGSYGGGFGGYGYGYGYGYGGYTDPRAAKGF) the chain is Extracellular. The chain crosses the membrane as a helical span at residues 141 to 161 (LLAMAAFCFIASLVIFVTSVI). Over 162 to 173 (RSGMSRTRRYYL) the chain is Cytoplasmic. The helical transmembrane segment at 174–194 (IVIIVSAILGIMVFIATIVYI) threads the bilayer. The Extracellular segment spans residues 195-244 (MGVNPTAQASGSMYGSQIYTICSQFYTPGGTGLYVDQYLYHYCVVDPQEA). Cysteines 216 and 237 form a disulfide. The chain crosses the membrane as a helical span at residues 245–265 (IAIVLGFMIIVAFALIIVFAV). The Cytoplasmic segment spans residues 266–523 (KTRRKMDRYD…MVGDYDRRKT (258 aa)). Ser-302 is subject to Phosphoserine. A disordered region spans residues 302–338 (SAGTQDMPPPPSDYAERVDSPMAYSSNGKVNGKRSYP). Phosphothreonine is present on Thr-305. Phosphoserine is present on residues Ser-313, Ser-321, Ser-340, and Ser-360. Residues 363 to 408 (DFRQPRYSSNDNLETPSKRTPTKGKAGKAKRTDPDHYETDYTTGGE) form a disordered region. A compositionally biased stretch (polar residues) spans 368 to 381 (RYSSNDNLETPSKR). The residue at position 369 (Tyr-369) is a Phosphotyrosine. Residues Ser-370 and Ser-371 each carry the phosphoserine modification. Residues 382–391 (TPTKGKAGKA) are compositionally biased toward basic residues. The segment covering 392 to 401 (KRTDPDHYET) has biased composition (basic and acidic residues). Residues Tyr-399 and Tyr-403 each carry the phosphotyrosine modification. 2 positions are modified to phosphothreonine; by PKC/PRKCH: Thr-404 and Thr-405. Residue Ser-409 is modified to Phosphoserine. An OCEL domain is found at 415-523 (EDWLREYPPI…MVGDYDRRKT (109 aa)). Residues 433–489 (YKRNFDAGLQEYKSLLAELDEVNKELSRLDRELDDYREESEEYMAAADEYNRLKQVK) adopt a coiled-coil conformation. Ser-491 is modified (phosphoserine).

It belongs to the ELL/occludin family. As to quaternary structure, interacts with TJP1/ZO1. Interacts with VAPA. Interacts with CLDN1, CLDN6, CLDN9, CLDN11, CLDN12 and CLDN17. Interacts with PLSCR1. Interacts with LSR, ILDR1 and ILDR2. Interacts with TJP2/ZO2. Post-translationally, dephosphorylated by PTPRJ.

It localises to the cell membrane. The protein resides in the cell junction. The protein localises to the tight junction. Functionally, may play a role in the formation and regulation of the tight junction (TJ) paracellular permeability barrier. May be involved in the organization of actin in endothelial cells. This chain is Occludin (Ocln), found in Rattus norvegicus (Rat).